A 255-amino-acid chain; its full sequence is tRNA uridine(34) hydroxylase (255 aa).

The Rhodanese domain maps to 131 to 225; it reads AAPDTLVLDT…YLEEVPEAQS (95 aa). The active-site Cysteine persulfide intermediate is the C185.

The protein belongs to the TrhO family.

It carries out the reaction uridine(34) in tRNA + AH2 + O2 = 5-hydroxyuridine(34) in tRNA + A + H2O. Its function is as follows. Catalyzes oxygen-dependent 5-hydroxyuridine (ho5U) modification at position 34 in tRNAs. The polypeptide is tRNA uridine(34) hydroxylase (Bradyrhizobium diazoefficiens (strain JCM 10833 / BCRC 13528 / IAM 13628 / NBRC 14792 / USDA 110)).